We begin with the raw amino-acid sequence, 320 residues long: Putative thiosulfate sulfurtransferase (320 aa).

A signal peptide spans 1 to 37 (MSVRSLRWPRQKAFLAVISLVVAVLLAVPGWLTPATA). Rhodanese domains are found at residues 56 to 166 (NNKQ…PVTK) and 194 to 315 (LTGK…PVET). The Cysteine persulfide intermediate role is filled by Cys-274.

It is found in the periplasm. The catalysed reaction is thiosulfate + hydrogen cyanide = thiocyanate + sulfite + 2 H(+). May be a sulfotransferase involved in the transport of sulfate. Displays very low rhodanese activity. The chain is Putative thiosulfate sulfurtransferase (rhdA) from Synechococcus elongatus (strain ATCC 33912 / PCC 7942 / FACHB-805) (Anacystis nidulans R2).